The chain runs to 329 residues: Ketol-acid reductoisomerase (NADP(+)) (329 aa).

The 180-residue stretch at Val-2–Thr-181 folds into the KARI N-terminal Rossmann domain. NADP(+)-binding positions include Tyr-25–Gln-28, Arg-48, Ser-52, and Asp-82–Gln-85. The active site involves His-107. Position 133 (Gly-133) interacts with NADP(+). Residues Thr-182–Phe-327 enclose the KARI C-terminal knotted domain. Mg(2+) is bound by residues Asp-190, Glu-194, Glu-226, and Glu-230. Ser-251 serves as a coordination point for substrate.

Belongs to the ketol-acid reductoisomerase family. It depends on Mg(2+) as a cofactor.

The catalysed reaction is (2R)-2,3-dihydroxy-3-methylbutanoate + NADP(+) = (2S)-2-acetolactate + NADPH + H(+). It carries out the reaction (2R,3R)-2,3-dihydroxy-3-methylpentanoate + NADP(+) = (S)-2-ethyl-2-hydroxy-3-oxobutanoate + NADPH + H(+). It participates in amino-acid biosynthesis; L-isoleucine biosynthesis; L-isoleucine from 2-oxobutanoate: step 2/4. The protein operates within amino-acid biosynthesis; L-valine biosynthesis; L-valine from pyruvate: step 2/4. In terms of biological role, involved in the biosynthesis of branched-chain amino acids (BCAA). Catalyzes an alkyl-migration followed by a ketol-acid reduction of (S)-2-acetolactate (S2AL) to yield (R)-2,3-dihydroxy-isovalerate. In the isomerase reaction, S2AL is rearranged via a Mg-dependent methyl migration to produce 3-hydroxy-3-methyl-2-ketobutyrate (HMKB). In the reductase reaction, this 2-ketoacid undergoes a metal-dependent reduction by NADPH to yield (R)-2,3-dihydroxy-isovalerate. The polypeptide is Ketol-acid reductoisomerase (NADP(+)) (Methanoculleus marisnigri (strain ATCC 35101 / DSM 1498 / JR1)).